The chain runs to 315 residues: High mobility group protein hmg-12 (315 aa).

The tract at residues 57-315 is disordered; the sequence is VKNETDSEAV…AIDAFFDGSD (259 aa). The span at 77–86 shows a compositional bias: polar residues; it reads ANDSPANTND. The segment at residues 118–128 is a DNA-binding region (a.T hook 1); sequence PVKKGRGRPIK. Composition is skewed to low complexity over residues 147 to 160 and 196 to 205; these read AQTP…IDTA and AADTDAIDTA.

This sequence belongs to the HMGA family.

The protein localises to the nucleus. Transcriptional regulator. Binds to specific sequence motifs in regulatory elements. May recruit transcription factors, or may induce structural changes in chromatin, to thereby modulate embryonic expression of ATP-dependent chaperone cdc-48.1. This is High mobility group protein hmg-12 from Caenorhabditis elegans.